The following is a 394-amino-acid chain: Metal tolerance protein 11 (394 aa).

At 1–103 (MVEPASPDSD…EQDNLAKSET (103 aa)) the chain is on the cytoplasmic side. The helical transmembrane segment at 104–124 (LAIRISNIANMLLFAAKVYAS) threads the bilayer. Residues 125–130 (VTSGSL) lie on the Vacuolar side of the membrane. A helical membrane pass occupies residues 131–151 (AIIASTLDSLLDLLSGFILWF). The Cytoplasmic segment spans residues 152–172 (TAFSMQTPNPYQYPIGKKRMQ). The chain crosses the membrane as a helical span at residues 173-193 (PLGILVFASVMATLGLQIILE). At 194 to 212 (SLRTMLSSHKEFNLTKEQE) the chain is on the vacuolar side. The helical transmembrane segment at 213-233 (SWVVGIMLSVTLVKLLLVLYC) threads the bilayer. The Cytoplasmic segment spans residues 234–251 (RSFTNEIVKAYAQDHFFD). A helical membrane pass occupies residues 252 to 272 (VITNIIGLIAVILANYIDYWI). Asp273 is a topological domain (vacuolar). Residues 274–294 (PVGAIILALYTIRTWSMTVLE) traverse the membrane as a helical segment. Residues 295-394 (NVNSLVGKSA…HKPEHARSHC (100 aa)) lie on the Cytoplasmic side of the membrane.

Belongs to the cation diffusion facilitator (CDF) transporter (TC 2.A.4) family. SLC30A subfamily. Widely expressed.

The protein resides in the prevacuolar compartment membrane. Its subcellular location is the golgi apparatus membrane. Its function is as follows. Cation/proton antiporter involved in endogenous manganese tolerance probably through vesicular trafficking and exocytosis. In Arabidopsis thaliana (Mouse-ear cress), this protein is Metal tolerance protein 11 (MTP11).